The primary structure comprises 330 residues: PDZ and LIM domain protein 4 (330 aa).

Residues 8 to 84 (RGPSPWGFRL…QLLLSVSRAE (77 aa)) enclose the PDZ domain. Disordered regions lie at residues 106–152 (EPEP…SSSA) and 163–182 (LHIS…RNRN). Over residues 139–152 (QHPQPSRPHASSSA) the composition is skewed to polar residues. Positions 255 to 305 (CTRCGNGIVGTIVKARDKLYHPECFMCDDCGLNLKQRGYFFIEEQLYCETH) constitute an LIM zinc-binding domain.

As to quaternary structure, interacts (via LIM domain) with PTPN13. Interacts (via PDZ domain) with ACTN1.

It localises to the cytoplasm. The protein resides in the cytoskeleton. Its subcellular location is the cell projection. The protein localises to the dendritic spine. It is found in the early endosome membrane. It localises to the recycling endosome membrane. The protein resides in the nucleus. Its subcellular location is the perinuclear region. The protein localises to the lamellipodium. It is found in the synapse. It localises to the synaptosome. Suppresses SRC activation by recognizing and binding to active SRC and facilitating PTPN13-mediated dephosphorylation of SRC 'Tyr-419' leading to its inactivation. Inactivated SRC dissociates from this protein allowing the initiation of a new SRC inactivation cycle. Involved in reorganization of the actin cytoskeleton. In nonmuscle cells, binds to ACTN1 (alpha-actinin-1), increases the affinity of ACTN1 to F-actin (filamentous actin), and promotes formation of actin stress fibers. Involved in regulation of the synaptic AMPA receptor transport in dendritic spines of hippocampal pyramidal neurons directing the receptors toward an insertion at the postsynaptic membrane. Links endosomal surface-internalized GRIA1-containing AMPA receptors to the alpha-actinin/actin cytoskeleton. Increases AMPA receptor-mediated excitatory postsynaptic currents in neurons. The protein is PDZ and LIM domain protein 4 (PDLIM4) of Gallus gallus (Chicken).